The primary structure comprises 576 residues: uncharacterized protein (576 aa).

Polar residues predominate over residues 241–261 (DNTKAPSPTNTAGSRELSTPA). A disordered region spans residues 241–270 (DNTKAPSPTNTAGSRELSTPAGSPGKASLP).

This is an uncharacterized protein from Bacillus subtilis (strain 168).